Reading from the N-terminus, the 511-residue chain is FAD-dependent monooxygenase AOL_s00215g279 (511 aa).

The signal sequence occupies residues 1-17 (MRFTLYGLLGFASLLHA). The FAD-binding PCMH-type domain occupies 85–256 (CWVNPACIVS…TEFDLRTRYS (172 aa)). At His-122 the chain carries Pros-8alpha-FAD histidine.

The protein belongs to the oxygen-dependent FAD-linked oxidoreductase family.

It functions in the pathway secondary metabolite biosynthesis; terpenoid biosynthesis. Functionally, FAD-dependent monooxygenase; part of the gene cluster that mediates the biosynthesis of sesquiterpenyl epoxy-cyclohexenoids (SECs) such as anthrobotrisins and arthrosporols, metabolites that possess a novel hybrid carbon skeleton consisting of a polyketide-derived epoxycyclohexenol combined with a terpenoid-derived monocyclic sesquiterpenol substructure (PKS-PTS hybrid). The SEC pathway plays an important role for fungal soil colonization via decreasing fungal nematode-capturing ability. Within the pathway, the FAD-dependent monooxygenase AOL_s00215g279 plays a role in the oxygenation of the phenol moiety, most likely in the epoxy formation. The pathway begins with the biosynthesis of 6-methylsalicylic acid (6-MSA), the first precursor of the polyketide-derived epoxycyclohexenol in arthrosporols, by the polyketide synthase (PKS) AOL_s00215g283 via condensation of 1 acetate and 3 malonate units. The 6-methylsalicylic acid decarboxylase AOL_s00215g281 then catalyzes the decarboxylation of 6-methylsalicylic acid to yield m-cresol. The cytochrome P450 monooxygenase AOL_s00215g282 further oxidizes m-cresol to yield toluquinol. With the assistance of the oxidoreductase AOL_s00215g277, the polyprenyl transferase AOL_s00215g276 catalyzes the farnesylation of toluquinol to produce farnesyl hydroquinone, the hybrid precursor for biosynthesis of SECs. Farnesyl hydroquinone undergoes epoxidation and then subsequent dehydrogenation to form farnesyl epoxy-quinone, the first and simplest SEC. The cytochrome P450 monooxygenase AOL_s00215g278 and the FAD-dependent monooxygenase AOL_s00215g279 might be involved in the oxygenation of the phenol moiety, most likely in the epoxy formation. The cytochrome P450 monooxygenases AOL_s00215g274 and AOL_s00215g280 are involved in specific regional ketone reductions at respectively C-4 and C-1 of farnesyl epoxy-quinone PubMed:33823587. This Arthrobotrys oligospora (strain ATCC 24927 / CBS 115.81 / DSM 1491) (Nematode-trapping fungus) protein is FAD-dependent monooxygenase AOL_s00215g279.